Consider the following 362-residue polypeptide: Inactive 2'-5' oligoadenylate synthetase 1C (362 aa).

This sequence belongs to the 2-5A synthase family. Expressed at highest level in brain with lesser amounts in spleen, kidney, stomach, liver, intestine, ovary, skin and testis. Not detected in lung, thymus, heart and uterus.

Functionally, does not have 2'-5'-OAS activity, but can bind double-stranded RNA. The protein is Inactive 2'-5' oligoadenylate synthetase 1C of Mus musculus (Mouse).